Reading from the N-terminus, the 489-residue chain is Ent-kaurenoic acid oxidase 2 (489 aa).

A helical membrane pass occupies residues 5–25 (GLILMWFPLIILGLFVLKWVL). A heme-binding site is contributed by Cys436.

Belongs to the cytochrome P450 family. The cofactor is heme. Widely expressed. Highly expressed in influorescence stem, influorescence, and silique tissue. Weakly expressed in cauline and rosette leaves. Expressed at a weaker level in stem and influorescence than AtKAO1/CYP88A3.

It is found in the endoplasmic reticulum membrane. The catalysed reaction is ent-kaur-16-en-19-oate + 3 reduced [NADPH--hemoprotein reductase] + 3 O2 = gibberellin A12 + 3 oxidized [NADPH--hemoprotein reductase] + 4 H2O + 4 H(+). It carries out the reaction ent-kaur-16-en-19-oate + reduced [NADPH--hemoprotein reductase] + O2 = ent-7alpha-hydroxykaur-16-en-19-oate + oxidized [NADPH--hemoprotein reductase] + H2O + H(+). It catalyses the reaction ent-7alpha-hydroxykaur-16-en-19-oate + reduced [NADPH--hemoprotein reductase] + O2 = gibberellin A12 aldehyde + oxidized [NADPH--hemoprotein reductase] + 2 H2O + H(+). The enzyme catalyses gibberellin A12 aldehyde + reduced [NADPH--hemoprotein reductase] + O2 = gibberellin A12 + oxidized [NADPH--hemoprotein reductase] + H2O + 2 H(+). The protein operates within plant hormone biosynthesis; gibberellin biosynthesis. In terms of biological role, catalyzes three successive oxidations of ent-kaurenoic acid giving gibberellin 12 (GA12), a key step in gibberellins (GAs) biosynthesis. GAs, which are involved many processes, including stem elongation, play a central role in plant development. The polypeptide is Ent-kaurenoic acid oxidase 2 (Arabidopsis thaliana (Mouse-ear cress)).